The chain runs to 236 residues: Small ribosomal subunit protein eS6 (236 aa).

2 positions are modified to phosphoserine: Ser-232 and Ser-233.

It belongs to the eukaryotic ribosomal protein eS6 family. Phosphorylated.

The protein is Small ribosomal subunit protein eS6 (RPS6) of Kluyveromyces lactis (strain ATCC 8585 / CBS 2359 / DSM 70799 / NBRC 1267 / NRRL Y-1140 / WM37) (Yeast).